The primary structure comprises 444 residues: MQLHSLIASTALLITSALAATSSSSSIPSSCTISSHATATAQSDLDKYSRCDTLVGNLTIGGGLKTGALANVKEINGSLTIFNATNLTSFAADSLESITDSLNLQSLTILTSASFGSLQSVDSIKLITLPAISSFTSNIKSANNIYISDTSLQSVDGFSALKKVNVFNVNNNKKLTSIKSPVETVSDSLQFSFNGNQTKITFDDLVWANNISLTDVHSVSFANLQKINSSLGFINNSISSLNFTKLNTIGQTFSIVSNDYLKNLSFSNLSTIGGALVVANNTGLQKIGGLDNLTTIGGTLEVVGNFTSLNLDSLKSVKGGADVESKSSNFSCNALKALQKKGGIKGESFVCKNGASSTSVKLSSTSKSQSSQTTAKVSKSSSKAEEKKFTSGDIKAAASASSVSSSSASSSSSKSSKGNAAIMAPIGQTTPLVGLLTAIIMSIM.

An N-terminal signal peptide occupies residues 1-19; it reads MQLHSLIASTALLITSALA. Asn57, Asn76, Asn83, Asn86, Asn196, Asn210, Asn228, Asn235, Asn242, Asn263, Asn268, Asn280, Asn292, Asn305, and Asn329 each carry an N-linked (GlcNAc...) asparagine glycan. 2 stretches are compositionally biased toward low complexity: residues 359–381 and 395–417; these read SVKL…SKSS and KAAA…KSSK. A disordered region spans residues 359 to 418; sequence SVKLSSTSKSQSSQTTAKVSKSSSKAEEKKFTSGDIKAAASASSVSSSSASSSSSKSSKG. Asn419 carries the GPI-anchor amidated asparagine lipid modification. The propeptide at 420–444 is removed in mature form; that stretch reads AAIMAPIGQTTPLVGLLTAIIMSIM.

The protein belongs to the SPS2 family. Extensively N- and O-mannosylated.

Its subcellular location is the cell membrane. The protein localises to the secreted. It localises to the cell wall. Has a partially redundant function to ECM33 in cell wall integrity. May be involved in a repair mechanism activated in response to cell wall damage. This Saccharomyces cerevisiae (strain YJM789) (Baker's yeast) protein is Cell wall mannoprotein PST1 (PST1).